The following is a 521-amino-acid chain: Bifunctional purine biosynthesis protein PurH (521 aa).

One can recognise an MGS-like domain in the interval Met1–Val145.

This sequence belongs to the PurH family.

The enzyme catalyses (6R)-10-formyltetrahydrofolate + 5-amino-1-(5-phospho-beta-D-ribosyl)imidazole-4-carboxamide = 5-formamido-1-(5-phospho-D-ribosyl)imidazole-4-carboxamide + (6S)-5,6,7,8-tetrahydrofolate. The catalysed reaction is IMP + H2O = 5-formamido-1-(5-phospho-D-ribosyl)imidazole-4-carboxamide. Its pathway is purine metabolism; IMP biosynthesis via de novo pathway; 5-formamido-1-(5-phospho-D-ribosyl)imidazole-4-carboxamide from 5-amino-1-(5-phospho-D-ribosyl)imidazole-4-carboxamide (10-formyl THF route): step 1/1. It functions in the pathway purine metabolism; IMP biosynthesis via de novo pathway; IMP from 5-formamido-1-(5-phospho-D-ribosyl)imidazole-4-carboxamide: step 1/1. This is Bifunctional purine biosynthesis protein PurH from Burkholderia cenocepacia (strain ATCC BAA-245 / DSM 16553 / LMG 16656 / NCTC 13227 / J2315 / CF5610) (Burkholderia cepacia (strain J2315)).